Reading from the N-terminus, the 592-residue chain is Aspartate--tRNA(Asp/Asn) ligase (592 aa).

Position 173 (Glu173) interacts with L-aspartate. Residues 197–200 (QLFK) form an aspartate region. Residue Arg219 participates in L-aspartate binding. ATP is bound by residues 219-221 (RDE) and Gln228. An L-aspartate-binding site is contributed by His448. Glu481 is an ATP binding site. Arg488 provides a ligand contact to L-aspartate. An ATP-binding site is contributed by 533 to 536 (GLDR).

Belongs to the class-II aminoacyl-tRNA synthetase family. Type 1 subfamily. Homodimer.

Its subcellular location is the cytoplasm. The enzyme catalyses tRNA(Asx) + L-aspartate + ATP = L-aspartyl-tRNA(Asx) + AMP + diphosphate. Aspartyl-tRNA synthetase with relaxed tRNA specificity since it is able to aspartylate not only its cognate tRNA(Asp) but also tRNA(Asn). Reaction proceeds in two steps: L-aspartate is first activated by ATP to form Asp-AMP and then transferred to the acceptor end of tRNA(Asp/Asn). This Chromohalobacter salexigens (strain ATCC BAA-138 / DSM 3043 / CIP 106854 / NCIMB 13768 / 1H11) protein is Aspartate--tRNA(Asp/Asn) ligase.